The primary structure comprises 321 residues: Olfactory receptor 14J1 (321 aa).

Residues 1–23 (MVNLTSMSGFLLMGFSDERKLQI) lie on the Extracellular side of the membrane. Asn-3 is a glycosylation site (N-linked (GlcNAc...) asparagine). A helical transmembrane segment spans residues 24–44 (LHALVFLVTYLLALTGNLLII). At 45–52 (TIITVDRR) the chain is on the cytoplasmic side. Residues 53 to 73 (LHSPMYYFLKHLSLLDLCFIS) traverse the membrane as a helical segment. The Extracellular segment spans residues 74 to 97 (VTVPQSIANSLMGNGYISLVQCIL). An intrachain disulfide couples Cys-95 to Cys-187. The helical transmembrane segment at 98 to 118 (QVFFFIALASSEVAILTVMSY) threads the bilayer. The Cytoplasmic portion of the chain corresponds to 119–137 (DRYAAICQPLHYETIMDPR). The chain crosses the membrane as a helical span at residues 138-158 (ACRHAVIAVWIAGGLSGLMHA). Over 159-194 (AINFSIPLCGKRVIHQFFCDVPQMLKLACSYEFINE) the chain is Extracellular. Residues 195 to 215 (IALAAFTTSAAFICLISIVLS) form a helical membrane-spanning segment. At 216-235 (YIRIFSTVLRIPSAEGRTKV) the chain is on the cytoplasmic side. Residues 236–256 (FSTCLPHLFVATFFLSAAGFE) form a helical membrane-spanning segment. Residues 257–269 (FLRLPSDSSSTVD) are Extracellular-facing. The helical transmembrane segment at 270-290 (LVFSVFYTVIPPTLNPVIYSL) threads the bilayer. Residues 291-321 (RNDSMKAALRKMLSKEELPQRKMCLKAMFKL) lie on the Cytoplasmic side of the membrane.

Belongs to the G-protein coupled receptor 1 family.

Its subcellular location is the cell membrane. Odorant receptor. The polypeptide is Olfactory receptor 14J1 (OR14J1) (Homo sapiens (Human)).